A 464-amino-acid polypeptide reads, in one-letter code: 3-isopropylmalate dehydratase large subunit (464 aa).

[4Fe-4S] cluster is bound by residues cysteine 337, cysteine 397, and cysteine 400.

It belongs to the aconitase/IPM isomerase family. LeuC type 1 subfamily. Heterodimer of LeuC and LeuD. Requires [4Fe-4S] cluster as cofactor.

It carries out the reaction (2R,3S)-3-isopropylmalate = (2S)-2-isopropylmalate. The protein operates within amino-acid biosynthesis; L-leucine biosynthesis; L-leucine from 3-methyl-2-oxobutanoate: step 2/4. Its function is as follows. Catalyzes the isomerization between 2-isopropylmalate and 3-isopropylmalate, via the formation of 2-isopropylmaleate. This Bacillus cereus (strain AH187) protein is 3-isopropylmalate dehydratase large subunit.